The sequence spans 275 residues: Formamidopyrimidine-DNA glycosylase (275 aa).

Catalysis depends on Pro-2, which acts as the Schiff-base intermediate with DNA. Glu-3 functions as the Proton donor in the catalytic mechanism. Lys-58 (proton donor; for beta-elimination activity) is an active-site residue. Residues His-91, Arg-109, and Arg-154 each coordinate DNA. The FPG-type zinc-finger motif lies at 240-274 (AVYERAGLPCRVCGTPIRRLVQGQRATYYCPSCQK). Arg-264 (proton donor; for delta-elimination activity) is an active-site residue.

Belongs to the FPG family. In terms of assembly, monomer. Zn(2+) serves as cofactor.

The enzyme catalyses Hydrolysis of DNA containing ring-opened 7-methylguanine residues, releasing 2,6-diamino-4-hydroxy-5-(N-methyl)formamidopyrimidine.. The catalysed reaction is 2'-deoxyribonucleotide-(2'-deoxyribose 5'-phosphate)-2'-deoxyribonucleotide-DNA = a 3'-end 2'-deoxyribonucleotide-(2,3-dehydro-2,3-deoxyribose 5'-phosphate)-DNA + a 5'-end 5'-phospho-2'-deoxyribonucleoside-DNA + H(+). Functionally, involved in base excision repair of DNA damaged by oxidation or by mutagenic agents. Acts as a DNA glycosylase that recognizes and removes damaged bases. Has a preference for oxidized purines, such as 7,8-dihydro-8-oxoguanine (8-oxoG). Has AP (apurinic/apyrimidinic) lyase activity and introduces nicks in the DNA strand. Cleaves the DNA backbone by beta-delta elimination to generate a single-strand break at the site of the removed base with both 3'- and 5'-phosphates. In Bordetella petrii (strain ATCC BAA-461 / DSM 12804 / CCUG 43448), this protein is Formamidopyrimidine-DNA glycosylase.